The primary structure comprises 246 residues: Uridylate kinase (246 aa).

Lys18–Gly21 lines the ATP pocket. Residue Gly60 coordinates UMP. Residues Gly61 and Arg65 each contribute to the ATP site. UMP contacts are provided by residues Asp80 and Thr141–Thr148. Thr168, Gln169, Tyr174, and Asp177 together coordinate ATP.

This sequence belongs to the UMP kinase family. Homohexamer.

The protein localises to the cytoplasm. The enzyme catalyses UMP + ATP = UDP + ADP. The protein operates within pyrimidine metabolism; CTP biosynthesis via de novo pathway; UDP from UMP (UMPK route): step 1/1. Its activity is regulated as follows. Inhibited by UTP. Catalyzes the reversible phosphorylation of UMP to UDP. This Granulibacter bethesdensis (strain ATCC BAA-1260 / CGDNIH1) protein is Uridylate kinase.